Reading from the N-terminus, the 1604-residue chain is Transposon Ty1-DR4 Gag-Pol polyprotein (1604 aa).

Polar residues-rich tracts occupy residues 1–23 (MESQ…SVTS), 48–60 (TKAN…TPAS), and 127–152 (QSQF…GNTF). 3 disordered regions span residues 1–93 (MESQ…MMTQ), 126–174 (PQSQ…PPPM), and 352–421 (GSRN…SKST). The span at 153-165 (TDSSSADSDMTST) shows a compositional bias: low complexity. The segment at 299–401 (NNGIHINNKV…NSKSKTARAH (103 aa)) is RNA-binding. Positions 402-418 (NVSTSNNSPSTDNDSIS) are enriched in low complexity. The residue at position 416 (S416) is a Phosphoserine. D461 functions as the For protease activity; shared with dimeric partner in the catalytic mechanism. The interval 583 to 640 (NVHTSESTRKYPYPFIHRMLAHANAQTIRYSLKNNTITYFNESDVDWSSAIDYQCPDC) is integrase-type zinc finger-like. Residues 660–835 (NSYEPFQYLH…AGLDISTLLP (176 aa)) enclose the Integrase catalytic domain. D671 and D736 together coordinate Mg(2+). 3 disordered regions span residues 956–1087 (SKAV…ETEK), 1092–1111 (RSPS…NIVP), and 1130–1187 (DLPL…DNET). Low complexity predominate over residues 960-969 (SPTDSTPPST). The span at 1005-1015 (STPQISNIEST) shows a compositional bias: polar residues. Positions 1038–1053 (ESSHASKSKDFRHSDS) are enriched in basic and acidic residues. Polar residues-rich tracts occupy residues 1054–1082 (YSEN…QISD) and 1101–1111 (PENNSSHNIVP). The Bipartite nuclear localization signal motif lies at 1178–1212 (KKRSLEDNETEIKVSRDTWNTKNMRSLEPPRSKKR). Positions 1338 to 1476 (NNYYITQLDI…DILGLEIKYQ (139 aa)) constitute a Reverse transcriptase Ty1/copia-type domain. Residues D1346, D1427, and D1428 each contribute to the Mg(2+) site.

In terms of assembly, the capsid protein forms a homotrimer, from which the VLPs are assembled. The protease is a homodimer, whose active site consists of two apposed aspartic acid residues. Initially, virus-like particles (VLPs) are composed of the structural unprocessed proteins Gag and Gag-Pol, and also contain the host initiator methionine tRNA (tRNA(i)-Met) which serves as a primer for minus-strand DNA synthesis, and a dimer of genomic Ty RNA. Processing of the polyproteins occurs within the particle and proceeds by an ordered pathway, called maturation. First, the protease (PR) is released by autocatalytic cleavage of the Gag-Pol polyprotein yielding capsid protein p45 and a Pol-p154 precursor protein. This cleavage is a prerequisite for subsequent processing of Pol-p154 at the remaining sites to release the mature structural and catalytic proteins. Maturation takes place prior to the RT reaction and is required to produce transposition-competent VLPs.

The protein localises to the cytoplasm. It is found in the nucleus. It catalyses the reaction DNA(n) + a 2'-deoxyribonucleoside 5'-triphosphate = DNA(n+1) + diphosphate. The catalysed reaction is Endonucleolytic cleavage to 5'-phosphomonoester.. Functionally, capsid protein (CA) is the structural component of the virus-like particle (VLP), forming the shell that encapsulates the retrotransposons dimeric RNA genome. The particles are assembled from trimer-clustered units and there are holes in the capsid shells that allow for the diffusion of macromolecules. CA also has nucleocapsid-like chaperone activity, promoting primer tRNA(i)-Met annealing to the multipartite primer-binding site (PBS), dimerization of Ty1 RNA and initiation of reverse transcription. In terms of biological role, the aspartyl protease (PR) mediates the proteolytic cleavages of the Gag and Gag-Pol polyproteins after assembly of the VLP. Reverse transcriptase/ribonuclease H (RT) is a multifunctional enzyme that catalyzes the conversion of the retro-elements RNA genome into dsDNA within the VLP. The enzyme displays a DNA polymerase activity that can copy either DNA or RNA templates, and a ribonuclease H (RNase H) activity that cleaves the RNA strand of RNA-DNA heteroduplexes during plus-strand synthesis and hydrolyzes RNA primers. The conversion leads to a linear dsDNA copy of the retrotransposon that includes long terminal repeats (LTRs) at both ends. Its function is as follows. Integrase (IN) targets the VLP to the nucleus, where a subparticle preintegration complex (PIC) containing at least integrase and the newly synthesized dsDNA copy of the retrotransposon must transit the nuclear membrane. Once in the nucleus, integrase performs the integration of the dsDNA into the host genome. The sequence is that of Transposon Ty1-DR4 Gag-Pol polyprotein (TY1B-DR4) from Saccharomyces cerevisiae (strain ATCC 204508 / S288c) (Baker's yeast).